Reading from the N-terminus, the 1855-residue chain is Collagen alpha-1(XXVII) chain (1855 aa).

Positions 1 to 48 (MGLARATAGLGPCCPPAPALLGAGLRWGGFLFAWILVSFSCHLASTQG) are cleaved as a signal peptide. Residues 49-618 (APEDVDVLQR…PEPTPFLMLM (570 aa)) constitute a propeptide, N-terminal propeptide. In terms of domain architecture, Laminin G-like spans 81-246 (PSGFIFTQRA…NYCAHLRERC (166 aa)). 2 N-linked (GlcNAc...) asparagine glycosylation sites follow: Asn-281 and Asn-349. 4 disordered regions span residues 317-428 (DVSK…SATV), 511-580 (PPLG…SQLS), 617-787 (LMGP…GFPG), and 838-1617 (GGVG…HPVQ). Polar residues-rich tracts occupy residues 382-427 (LSVT…SSAT) and 520-532 (MMPSTRDSTSTPA). Residues 563-573 (TARDASPRDLT) are compositionally biased toward basic and acidic residues. 13 Collagen-like domains span residues 619-673 (GPPG…GDPG), 682-741 (GAKG…PGPV), 751-810 (GYIG…PGPP), 826-885 (GYPG…PGPM), 886-945 (GKAG…EGPM), 946-1005 (GPPG…VGEK), 1006-1047 (GDRG…PGSR), 1048-1105 (GLPG…GAKG), 1108-1155 (GIPG…PGLP), 1156-1215 (GDSG…KGQE), 1216-1275 (GLKG…PGTP), 1276-1330 (GPKG…GEDG), and 1334-1393 (GAPG…KGSK). The triple-helical region stretch occupies residues 619 to 1612 (GPPGSKGDCG…RGRPGPPGPP (994 aa)). The segment covering 630 to 663 (PGPPGLPGLPGSPGPRGPRGPPGPFGNPGLPGPP) has biased composition (pro residues). Positions 708–728 (PGAAGHPGEQGQPGPEGSPGA) are enriched in low complexity. Residues 905–918 (FPGDIGPPGDNGPE) are compositionally biased toward low complexity. A compositionally biased stretch (gly residues) spans 1027–1036 (GTPGGVGDPG). 3 stretches are compositionally biased toward low complexity: residues 1083 to 1095 (RGRPGQPGQQGAA), 1121 to 1131 (LPGEPGSQGPQ), and 1161 to 1176 (KGDLGPLGPPGEQGLI). 3 stretches are compositionally biased toward basic and acidic residues: residues 1196 to 1221 (LKGDRGDPGPDGEHGEKGQEGLKGEE), 1320 to 1332 (KGEKGEQGEDGKT), and 1344 to 1354 (PVGDRGDRGEP). Composition is skewed to low complexity over residues 1369-1378 (RGEPGQQGQP) and 1404-1431 (KAGASGRRGTQGLQGLPGPRGVVGRQGP). Collagen-like domains are found at residues 1433–1492 (GMAG…SGLP), 1493–1552 (GQLG…KGIQ), and 1553–1612 (GPRG…PGPP). The segment covering 1566–1581 (IIGPPGMLGPSGLPGP) has biased composition (low complexity). Pro residues predominate over residues 1597–1614 (RGPPGPRGRPGPPGPPWH). Positions 1616–1855 (VQFQQDDLEA…RLEVGPACFL (240 aa)) are cleaved as a propeptide — C-terminal propeptide. The 201-residue stretch at 1655 to 1855 (GEIFKTLHYL…RLEVGPACFL (201 aa)) folds into the Fibrillar collagen NC1 domain. 3 disulfide bridges follow: Cys-1685-Cys-1717, Cys-1726-Cys-1853, and Cys-1762-Cys-1806. Residues Asp-1703, Asn-1705, Cys-1708, and Asp-1711 each contribute to the Ca(2+) site. Asn-1764 is a glycosylation site (N-linked (GlcNAc...) asparagine).

This sequence belongs to the fibrillar collagen family.

It is found in the secreted. The protein resides in the extracellular space. Its subcellular location is the extracellular matrix. Its function is as follows. Plays a role during the calcification of cartilage and the transition of cartilage to bone. In Rattus norvegicus (Rat), this protein is Collagen alpha-1(XXVII) chain (Col27a1).